Reading from the N-terminus, the 351-residue chain is Ribosomal RNA large subunit methyltransferase M (351 aa).

Residues Ser-186, 219-222 (APGG), Asp-238, Asp-258, and Asp-274 each bind S-adenosyl-L-methionine. Catalysis depends on Lys-303, which acts as the Proton acceptor.

It belongs to the class I-like SAM-binding methyltransferase superfamily. RNA methyltransferase RlmE family. RlmM subfamily. As to quaternary structure, monomer.

It is found in the cytoplasm. The enzyme catalyses cytidine(2498) in 23S rRNA + S-adenosyl-L-methionine = 2'-O-methylcytidine(2498) in 23S rRNA + S-adenosyl-L-homocysteine + H(+). Its function is as follows. Catalyzes the 2'-O-methylation at nucleotide C2498 in 23S rRNA. In Xylella fastidiosa (strain 9a5c), this protein is Ribosomal RNA large subunit methyltransferase M.